Here is a 160-residue protein sequence, read N- to C-terminus: Glucagon-1 (160 aa).

An N-terminal signal peptide occupies residues 1 to 22 (MSDPGFLAAPVLLLLLVSLASA). 3 propeptides span residues 23 to 40 (SLEQAASRDDDSAERPLS), 74 to 79 (GGSELQ), and 116 to 127 (DGGDHLAENSED). The interval 112-132 (KSRRDGGDHLAENSEDKRHAE) is disordered.

Belongs to the glucagon family.

Its subcellular location is the secreted. Functionally, promotes hydrolysis of glycogen and lipids, and raises the blood sugar level. The polypeptide is Glucagon-1 (gcg1) (Petromyzon marinus (Sea lamprey)).